Consider the following 54-residue polypeptide: Large ribosomal subunit protein bL33B (54 aa).

It belongs to the bacterial ribosomal protein bL33 family.

The chain is Large ribosomal subunit protein bL33B (rpmG2) from Streptomyces coelicolor (strain ATCC BAA-471 / A3(2) / M145).